A 128-amino-acid polypeptide reads, in one-letter code: Transcription antitermination protein NusB (128 aa).

This sequence belongs to the NusB family.

Involved in transcription antitermination. Required for transcription of ribosomal RNA (rRNA) genes. Binds specifically to the boxA antiterminator sequence of the ribosomal RNA (rrn) operons. The chain is Transcription antitermination protein NusB from Staphylococcus carnosus (strain TM300).